A 277-amino-acid chain; its full sequence is Caspase-3 (277 aa).

Met1 bears the N-acetylmethionine mark. 2 propeptides span residues 1–9 and 10–28; these read MDNNETSVD and SKSI…KSMD. Lys11 carries the N6-acetyllysine modification. Ser26 carries the phosphoserine modification. Residues His121 and Cys163 contribute to the active site. Cys163 carries the S-nitrosocysteine; in inhibited form modification.

Belongs to the peptidase C14A family. As to quaternary structure, heterotetramer that consists of two anti-parallel arranged heterodimers, each one formed by a 17 kDa (p17) and a 12 kDa (p12) subunit. Interacts with BIRC6/bruce. Cleavage by granzyme B, caspase-6, caspase-8 and caspase-10 generates the two active subunits. Additional processing of the propeptides is likely due to the autocatalytic activity of the activated protease. Active heterodimers between the small subunit of caspase-7 protease and the large subunit of caspase-3 also occur and vice versa. Post-translationally, S-nitrosylated on its catalytic site cysteine in unstimulated cell lines and denitrosylated upon activation of the Fas apoptotic pathway, associated with an increase in intracellular caspase activity. Fas therefore activates caspase-3 not only by inducing the cleavage of the caspase zymogen to its active subunits, but also by stimulating the denitrosylation of its active site thiol. In terms of processing, ubiquitinated by BIRC6; this activity is inhibited by DIABLO/SMAC. Expressed in heart, brain, liver, and muscle but not in kidney or testis.

The protein resides in the cytoplasm. The enzyme catalyses Strict requirement for an Asp residue at positions P1 and P4. It has a preferred cleavage sequence of Asp-Xaa-Xaa-Asp-|- with a hydrophobic amino-acid residue at P2 and a hydrophilic amino-acid residue at P3, although Val or Ala are also accepted at this position.. Inhibited by BIRC6; following inhibition of BIRC6-caspase binding by DIABLO/SMAC, BIRC6 is subjected to caspase cleavage, leading to an increase in active caspases. Its function is as follows. Involved in the activation cascade of caspases responsible for apoptosis execution. At the onset of apoptosis, it proteolytically cleaves poly(ADP-ribose) polymerase PARP1 at a '216-Asp-|-Gly-217' bond. Cleaves and activates sterol regulatory element binding proteins (SREBPs) between the basic helix-loop-helix leucine zipper domain and the membrane attachment domain. Cleaves and activates caspase-6, -7 and -9 (CASP6, CASP7 and CASP9, respectively). Cleaves and inactivates interleukin-18 (IL18). Triggers cell adhesion in sympathetic neurons through RET cleavage. Cleaves IL-1 beta between an Asp and an Ala, releasing the mature cytokine which is involved in a variety of inflammatory processes. Cleaves and inhibits serine/threonine-protein kinase AKT1 in response to oxidative stress. Acts as an inhibitor of type I interferon production during virus-induced apoptosis by mediating cleavage of antiviral proteins CGAS, IRF3 and MAVS, thereby preventing cytokine overproduction. Also involved in pyroptosis by mediating cleavage and activation of gasdermin-E (GSDME). Cleaves XRCC4 and phospholipid scramblase proteins XKR4, XKR8 and XKR9, leading to promote phosphatidylserine exposure on apoptotic cell surface. Cleaves BIRC6 following inhibition of BIRC6-caspase binding by DIABLO/SMAC. This chain is Caspase-3 (Casp3), found in Rattus norvegicus (Rat).